The primary structure comprises 179 residues: MSRIGRKPIEVPAGVTVNVDSNNLVTVKGPKGTLSESIRPEVTVNINGATVEITRVNDSRQARAFHGLSRTLVANMVDGVTKGFEKTLEMNGTGYRATLDGKTLVLSLGFSHPVRVEPYEGNSFEVAERRVVIKGPNKQKVGDQAANIRKLRPPEPYLGKGIKYSDEVIRRKAGKAGKK.

This sequence belongs to the universal ribosomal protein uL6 family. In terms of assembly, part of the 50S ribosomal subunit.

Functionally, this protein binds to the 23S rRNA, and is important in its secondary structure. It is located near the subunit interface in the base of the L7/L12 stalk, and near the tRNA binding site of the peptidyltransferase center. This chain is Large ribosomal subunit protein uL6, found in Herpetosiphon aurantiacus (strain ATCC 23779 / DSM 785 / 114-95).